Consider the following 110-residue polypeptide: T cell receptor alpha variable 39 (110 aa).

Positions 1–18 (MKKLLAMILWLQLDRLSG) are cleaved as a signal peptide. Residues 19-110 (ELKVEQNPLF…LSATYFCAVD (92 aa)) enclose the Ig-like domain. Asparagine 36 and asparagine 42 each carry an N-linked (GlcNAc...) asparagine glycan. Residues cysteine 41 and cysteine 107 are joined by a disulfide bond.

In terms of assembly, alpha-beta TR is a heterodimer composed of an alpha and beta chain; disulfide-linked. The alpha-beta TR is associated with the transmembrane signaling CD3 coreceptor proteins to form the TR-CD3 (TcR or TCR). The assembly of alpha-beta TR heterodimers with CD3 occurs in the endoplasmic reticulum where a single alpha-beta TR heterodimer associates with one CD3D-CD3E heterodimer, one CD3G-CD3E heterodimer and one CD247 homodimer forming a stable octameric structure. CD3D-CD3E and CD3G-CD3E heterodimers preferentially associate with TR alpha and TR beta chains, respectively. The association of the CD247 homodimer is the last step of TcR assembly in the endoplasmic reticulum and is required for transport to the cell surface.

It localises to the cell membrane. Its function is as follows. V region of the variable domain of T cell receptor (TR) alpha chain that participates in the antigen recognition. Alpha-beta T cell receptors are antigen specific receptors which are essential to the immune response and are present on the cell surface of T lymphocytes. Recognize peptide-major histocompatibility (MH) (pMH) complexes that are displayed by antigen presenting cells (APC), a prerequisite for efficient T cell adaptive immunity against pathogens. Binding of alpha-beta TR to pMH complex initiates TR-CD3 clustering on the cell surface and intracellular activation of LCK that phosphorylates the ITAM motifs of CD3G, CD3D, CD3E and CD247 enabling the recruitment of ZAP70. In turn ZAP70 phosphorylates LAT, which recruits numerous signaling molecules to form the LAT signalosome. The LAT signalosome propagates signal branching to three major signaling pathways, the calcium, the mitogen-activated protein kinase (MAPK) kinase and the nuclear factor NF-kappa-B (NF-kB) pathways, leading to the mobilization of transcription factors that are critical for gene expression and essential for T cell growth and differentiation. The T cell repertoire is generated in the thymus, by V-(D)-J rearrangement. This repertoire is then shaped by intrathymic selection events to generate a peripheral T cell pool of self-MH restricted, non-autoaggressive T cells. Post-thymic interaction of alpha-beta TR with the pMH complexes shapes TR structural and functional avidity. In Homo sapiens (Human), this protein is T cell receptor alpha variable 39.